Consider the following 419-residue polypeptide: Copalyl diphosphate synthase 2, chloroplastic (419 aa).

Lys82 is a binding site for substrate.

Belongs to the terpene synthase family. Tpsc subfamily. Mg(2+) is required as a cofactor. In terms of tissue distribution, ubiquitous expression in roots, stems, leaves and flowers.

It localises to the plastid. The protein resides in the chloroplast. It carries out the reaction (2E,6E,10E)-geranylgeranyl diphosphate = (+)-copalyl diphosphate. Its pathway is secondary metabolite biosynthesis; terpenoid biosynthesis. Functionally, involved in the biosynthesis of ent-kaurene diterpenoids natural products such as oridonin, miltiradiene, eriocalyxin B and nezukol, known to exhibit antitumor, anti-inflammatory and antibacterial activities. Catalyzes the conversion of (2E,6E,10E)-geranylgeranyl diphosphate (GGPP) to (+)-copalyl diphosphate ((+)-CPP). The chain is Copalyl diphosphate synthase 2, chloroplastic from Isodon rubescens (Rabdosia rubescens).